Reading from the N-terminus, the 263-residue chain is Nuclear egress protein 2 (263 aa).

The Perinuclear space portion of the chain corresponds to 1-235 (MASGKKLIDQ…STSLTGRCPS (235 aa)). Residues 236–256 (WGAACALLLLSLAVGLMAILA) form a helical membrane-spanning segment. The Nuclear portion of the chain corresponds to 257 to 263 (AKLMQWP).

It belongs to the herpesviridae NEC2 protein family. In terms of assembly, forms a heterohexameric complex with NEC1. Post-translationally, phosphorylated.

It localises to the host nucleus inner membrane. In terms of biological role, plays an essential role in virion nuclear egress, the first step of virion release from infected cell. Within the host nucleus, NEC1 interacts with the newly formed capsid through the vertexes and directs it to the inner nuclear membrane by associating with NEC2. Induces the budding of the capsid at the inner nuclear membrane as well as its envelopment into the perinuclear space. There, the NEC1/NEC2 complex promotes the fusion of the enveloped capsid with the outer nuclear membrane and the subsequent release of the viral capsid into the cytoplasm where it will reach the secondary budding sites in the host Golgi or trans-Golgi network. The chain is Nuclear egress protein 2 from Connochaetes taurinus (Blue wildebeest).